A 340-amino-acid chain; its full sequence is Ephrin-B3 (340 aa).

The first 27 residues, 1 to 27 (MGPPHSGPGGVRVGALLLLGVLGLVSG), serve as a signal peptide directing secretion. The Ephrin RBD domain maps to 28–167 (LSLEPVYWNS…TRGMKVLLRV (140 aa)). The Extracellular segment spans residues 28 to 226 (LSLEPVYWNS…EGPLPPPSMP (199 aa)). 2 disulfides stabilise this stretch: Cys62-Cys104 and Cys92-Cys156. The interval 168-225 (GQSPRGGAVPRKPVSEMPMERDRGAAHSLEPGKENLPGDPTSNATSRGAEGPLPPPSM) is disordered. Residues 185–200 (PMERDRGAAHSLEPGK) are compositionally biased toward basic and acidic residues. N-linked (GlcNAc...) asparagine glycosylation occurs at Asn210. The chain crosses the membrane as a helical span at residues 227–247 (AVAGAAGGLALLLLGVAGAGG). At 248-340 (AMCWRRRRAK…QSPPNIYYKV (93 aa)) the chain is on the cytoplasmic side. Residues 254-298 (RRAKPSESRHPGPGSFGRGGSLGLGGGGGMGPREAEPGELGIALR) are disordered. The span at 267–284 (GSFGRGGSLGLGGGGGMG) shows a compositional bias: gly residues. Omega-N-methylarginine is present on Arg271. A Phosphoserine modification is found at Ser274. The PDZ-binding signature appears at 338–340 (YKV).

Belongs to the ephrin family. Interacts with GRIP1 and GRIP2. As to quaternary structure, (Microbial infection) Interacts with nipah virus and hendra virus glycoprotein. In terms of tissue distribution, highly expressed in brain; expressed in embryonic floor plate, roof plate and hindbrain segments.

It is found in the membrane. Its function is as follows. Cell surface transmembrane ligand for Eph receptors, a family of receptor tyrosine kinases which are crucial for migration, repulsion and adhesion during neuronal, vascular and epithelial development. Binds promiscuously Eph receptors residing on adjacent cells, leading to contact-dependent bidirectional signaling into neighboring cells. The signaling pathway downstream of the receptor is referred to as forward signaling while the signaling pathway downstream of the ephrin ligand is referred to as reverse signaling. May play a pivotal role in forebrain function. Binds to, and induce the collapse of, commissural axons/growth cones in vitro. May play a role in constraining the orientation of longitudinally projecting axons. Functionally, (Microbial infection) Acts as a receptor for nipah virus and hendra virus. The polypeptide is Ephrin-B3 (EFNB3) (Homo sapiens (Human)).